Here is a 93-residue protein sequence, read N- to C-terminus: Small ribosomal subunit protein uS19 (93 aa).

This sequence belongs to the universal ribosomal protein uS19 family.

Protein S19 forms a complex with S13 that binds strongly to the 16S ribosomal RNA. The sequence is that of Small ribosomal subunit protein uS19 from Clavibacter michiganensis subsp. michiganensis (strain NCPPB 382).